The chain runs to 49 residues: Turripeptide OL47 (49 aa).

The disordered stretch occupies residues 28-49 (RSDTEKKCTGGPDPCPPRQWPD). Residues 40–49 (DPCPPRQWPD) are compositionally biased toward pro residues.

Contains 4 disulfide bonds. In terms of tissue distribution, expressed by the venom duct.

The protein resides in the secreted. Acts as a neurotoxin by inhibiting an ion channel. In Iotyrris olangoensis (Sea snail), this protein is Turripeptide OL47.